A 104-amino-acid chain; its full sequence is Iron-sulfur cluster assembly protein CyaY (104 aa).

The protein belongs to the frataxin family.

Involved in iron-sulfur (Fe-S) cluster assembly. May act as a regulator of Fe-S biogenesis. This Vibrio atlanticus (strain LGP32) (Vibrio splendidus (strain Mel32)) protein is Iron-sulfur cluster assembly protein CyaY.